The chain runs to 400 residues: Argininosuccinate synthase (400 aa).

An ATP-binding site is contributed by 9–17; sequence AYSGGLDTS. Position 87 (Tyr87) interacts with L-citrulline. Gly117 contributes to the ATP binding site. L-aspartate contacts are provided by Thr119, Asn123, and Asp124. An L-citrulline-binding site is contributed by Asn123. Positions 127, 176, 185, 261, and 273 each coordinate L-citrulline.

It belongs to the argininosuccinate synthase family. Type 1 subfamily. Homotetramer.

Its subcellular location is the cytoplasm. The enzyme catalyses L-citrulline + L-aspartate + ATP = 2-(N(omega)-L-arginino)succinate + AMP + diphosphate + H(+). The protein operates within amino-acid biosynthesis; L-arginine biosynthesis; L-arginine from L-ornithine and carbamoyl phosphate: step 2/3. The protein is Argininosuccinate synthase of Pelodictyon phaeoclathratiforme (strain DSM 5477 / BU-1).